A 169-amino-acid chain; its full sequence is MPLLDSFKVDHTRMNAPAVRVAKTMTTPKGDTITVFDLRFVRPNIEILSPRGIHTMEHLFAGFMRDHLNSDTVEIIDISPMGCRTGFYMSLIGSPSAEEVAKAWEASMRDALEKVPDETKIPELNEFQCGSYKEHSLADAHEIVRNVLKQPIGINRNKDLALDEKLLNP.

Fe cation contacts are provided by H54, H58, and C129.

This sequence belongs to the LuxS family. As to quaternary structure, homodimer. The cofactor is Fe cation.

It carries out the reaction S-(5-deoxy-D-ribos-5-yl)-L-homocysteine = (S)-4,5-dihydroxypentane-2,3-dione + L-homocysteine. Involved in the synthesis of autoinducer 2 (AI-2) which is secreted by bacteria and is used to communicate both the cell density and the metabolic potential of the environment. The regulation of gene expression in response to changes in cell density is called quorum sensing. Catalyzes the transformation of S-ribosylhomocysteine (RHC) to homocysteine (HC) and 4,5-dihydroxy-2,3-pentadione (DPD). The polypeptide is S-ribosylhomocysteine lyase (Glaesserella parasuis serovar 5 (strain SH0165) (Haemophilus parasuis)).